We begin with the raw amino-acid sequence, 230 residues long: Early E1A protein (230 aa).

The interval 40–48 is interaction with RB1 in competition with E2F1; the sequence is PSLHDLFDL. Positions 106 to 110 match the LXCXE motif, interaction with host RB1 motif; it reads LLCLE. A zinc finger spans residues 145 to 163; sequence CLRCAYYQEQGENSICGLC. The segment at 189–230 is disordered; sequence KPGSRKRSAVTSRGSVESSKRPCLPEPEQTEPLDLSLKPRPQ. The short motif at 220–224 is the PXDLS motif, CTBP-binding element; it reads PLDLS. Positions 226-230 match the Nuclear localization signal motif; the sequence is KPRPQ.

The protein belongs to the adenoviridae E1A protein family. Interacts with host UBE2I; this interaction interferes with polySUMOylation. Interacts with host RB1; this interaction induces the aberrant dissociation of RB1-E2F1 complex thereby disrupting the activity of RB1 and activating E2F1-regulated genes. Interacts with host ATF7; the interaction enhances ATF7-mediated viral transactivation activity which requires the zinc binding domains of both proteins. Isoform early E1A 32 kDa protein and isoform early E1A 26 kDa protein interact (via N-terminus) with CUL1 and E3 ubiquitin ligase RBX1; these interactions inhibit RBX1-CUL1-dependent elongation reaction of ubiquitin chains and attenuate ubiquitination of SCF(FBXW7) target proteins. Interacts (via PXLXP motif) with host ZMYND11/BS69 (via MYND-type zinc finger); this interaction inhibits E1A mediated transactivation. Interacts with host EP300; this interaction stimulates the acetylation of RB1 by recruiting EP300 and RB1 into a multimeric-protein complex. Interacts with host CTBP1 and CTBP2; this interaction seems to potentiate viral replication. Interacts with host DCAF7. Interacts with host DYRK1A. Interacts with host KPNA4; this interaction allows E1A import into the host nucleus. Interacts with host EP400; this interaction stabilizes MYC. Interacts with host TBP protein; this interaction probably disrupts the TBP-TATA complex.

It is found in the host nucleus. Its function is as follows. Plays a role in viral genome replication by driving entry of quiescent cells into the cell cycle. Stimulation of progression from G1 to S phase allows the virus to efficiently use the cellular DNA replicating machinery to achieve viral genome replication. E1A protein has both transforming and trans-activating activities. Induces the disassembly of the E2F1 transcription factor from RB1 by direct competition for the same binding site on RB1, with subsequent transcriptional activation of E2F1-regulated S-phase genes and of the E2 region of the adenoviral genome. Release of E2F1 leads to the ARF-mediated inhibition of MDM2 and causes TP53/p53 to accumulate because it is not targeted for degradation by MDM2-mediated ubiquitination anymore. This increase in TP53, in turn, would arrest the cell proliferation and direct its death but this effect is counteracted by the viral protein E1B-55K. Inactivation of the ability of RB1 to arrest the cell cycle is critical for cellular transformation, uncontrolled cellular growth and proliferation induced by viral infection. Interaction with RBX1 and CUL1 inhibits ubiquitination of the proteins targeted by SCF(FBXW7) ubiquitin ligase complex, and may be linked to unregulated host cell proliferation. The tumorigenesis-restraining activity of E1A may be related to the disruption of the host CtBP-CtIP complex through the CtBP binding motif. This chain is Early E1A protein, found in Canine adenovirus serotype 1 (strain CLL) (CAdV-1).